The following is a 436-amino-acid chain: 3-ketoacyl-CoA thiolase (436 aa).

Cys-99 acts as the Acyl-thioester intermediate in catalysis. Catalysis depends on proton acceptor residues His-392 and Cys-422.

The protein belongs to the thiolase-like superfamily. Thiolase family. As to quaternary structure, heterotetramer of two alpha chains (FadJ) and two beta chains (FadI).

It localises to the cytoplasm. It carries out the reaction an acyl-CoA + acetyl-CoA = a 3-oxoacyl-CoA + CoA. Its pathway is lipid metabolism; fatty acid beta-oxidation. In terms of biological role, catalyzes the final step of fatty acid oxidation in which acetyl-CoA is released and the CoA ester of a fatty acid two carbons shorter is formed. The polypeptide is 3-ketoacyl-CoA thiolase (Shewanella putrefaciens (strain CN-32 / ATCC BAA-453)).